The chain runs to 67 residues: uncharacterized protein (67 aa).

The signal sequence occupies residues 1 to 28 (MSHVSVIAARLLVWVGILLCLGVPQLWA). Residue Asn-39 is glycosylated (N-linked (GlcNAc...) asparagine; by host).

This is an uncharacterized protein from Invertebrate iridescent virus 3 (IIV-3).